Reading from the N-terminus, the 384-residue chain is Flap endonuclease 1 (384 aa).

The segment at 1 to 105 is N-domain; it reads MGIKKLTDLI…GELAKRQARR (105 aa). A Mg(2+)-binding site is contributed by Asp-34. Arg-71 is a binding site for DNA. Residues Asp-87, Glu-159, Glu-161, Asp-180, and Asp-182 each contribute to the Mg(2+) site. The segment at 123 to 254 is I-domain; that stretch reads EVQKFAKRVI…KRAIELIQKH (132 aa). Residue Glu-159 participates in DNA binding. Gly-232 and Asp-234 together coordinate DNA. Asp-234 is a Mg(2+) binding site. Positions 338–346 are interaction with PCNA; it reads VQSRMDSFI. The interval 349 to 384 is disordered; the sequence is IKKPEDPNDKKKKVTKTPSKPSAKTSKKSSSTFKRK. Low complexity predominate over residues 364 to 384; it reads KTPSKPSAKTSKKSSSTFKRK.

This sequence belongs to the XPG/RAD2 endonuclease family. FEN1 subfamily. Interacts with PCNA. Three molecules of repg bind to one PCNA trimer with each molecule binding to one PCNA monomer. PCNA stimulates the nuclease activity without altering cleavage specificity. Mg(2+) is required as a cofactor. Post-translationally, phosphorylated. Phosphorylation upon DNA damage induces relocalization to the nuclear plasma.

The protein resides in the nucleus. It localises to the nucleolus. Its subcellular location is the nucleoplasm. The protein localises to the mitochondrion. Its function is as follows. Structure-specific nuclease with 5'-flap endonuclease and 5'-3' exonuclease activities involved in DNA replication and repair. During DNA replication, cleaves the 5'-overhanging flap structure that is generated by displacement synthesis when DNA polymerase encounters the 5'-end of a downstream Okazaki fragment. It enters the flap from the 5'-end and then tracks to cleave the flap base, leaving a nick for ligation. Also involved in the long patch base excision repair (LP-BER) pathway, by cleaving within the apurinic/apyrimidinic (AP) site-terminated flap. Acts as a genome stabilization factor that prevents flaps from equilibrating into structures that lead to duplications and deletions. Also possesses 5'-3' exonuclease activity on nicked or gapped double-stranded DNA, and exhibits RNase H activity. Also involved in replication and repair of rDNA and in repairing mitochondrial DNA. The sequence is that of Flap endonuclease 1 from Dictyostelium discoideum (Social amoeba).